Here is a 381-residue protein sequence, read N- to C-terminus: Alkanesulfonate monooxygenase (381 aa).

It belongs to the SsuD family. As to quaternary structure, homotetramer.

It carries out the reaction an alkanesulfonate + FMNH2 + O2 = an aldehyde + FMN + sulfite + H2O + 2 H(+). Functionally, catalyzes the desulfonation of aliphatic sulfonates. This is Alkanesulfonate monooxygenase from Escherichia coli (strain SMS-3-5 / SECEC).